A 270-amino-acid chain; its full sequence is 5-deoxy-glucuronate isomerase (270 aa).

The protein belongs to the isomerase IolB family.

The catalysed reaction is 5-deoxy-D-glucuronate = 5-dehydro-2-deoxy-D-gluconate. It functions in the pathway polyol metabolism; myo-inositol degradation into acetyl-CoA; acetyl-CoA from myo-inositol: step 4/7. Functionally, involved in the isomerization of 5-deoxy-glucuronate (5DG) to 5-dehydro-2-deoxy-D-gluconate (DKG or 2-deoxy-5-keto-D-gluconate). The protein is 5-deoxy-glucuronate isomerase of Halalkalibacterium halodurans (strain ATCC BAA-125 / DSM 18197 / FERM 7344 / JCM 9153 / C-125) (Bacillus halodurans).